The sequence spans 1202 residues: Nitric oxide synthase 3 (1202 aa).

The segment at 1 to 70 (MGNLKSVGQE…PPDGPKFPRV (70 aa)) is disordered. Residue Gly-2 is the site of N-myristoyl glycine attachment. 2 S-palmitoyl cysteine lipidation sites follow: Cys-15 and Cys-26. Residues 15-27 (CGLGLGLGLGLCG) show a composition bias toward gly residues. Residues 33 to 65 (SPAPEPSQAPVPPSPTRPAPDHSPPLTRPPDGP) are compositionally biased toward pro residues. Zn(2+) is bound by residues Cys-93 and Cys-98. An interaction with NOSIP region spans residues 97–485 (RCLGSLVFPR…PDPWKGSAAK (389 aa)). Ser-101 provides a ligand contact to (6R)-L-erythro-5,6,7,8-tetrahydrobiopterin. Cys-183 serves as a coordination point for heme b. 4 residues coordinate L-arginine: Gln-246, Trp-355, Tyr-356, and Glu-360. Positions 445, 446, and 459 each coordinate (6R)-L-erythro-5,6,7,8-tetrahydrobiopterin. Tyr-474 provides a ligand contact to heme b. The calmodulin-binding stretch occupies residues 489 to 509 (ITRKKTFKEVANAVKISASLM). Thr-494 bears the Phosphothreonine; by AMPK mark. The 184-residue stretch at 519-702 (ATILYGSETG…AFRGWAQAAF (184 aa)) folds into the Flavodoxin-like domain. Residues Ser-525, Glu-526, Thr-527, Arg-529, Ser-571, and Thr-572 each contribute to the FMN site. Phosphoserine is present on residues Ser-614, Ser-632, and Ser-637. FMN is bound by residues Ser-653, Cys-660, Glu-686, and Gln-690. In terms of domain architecture, FAD-binding FR-type spans 755–1001 (RKMFQATILS…IRGAPSFRLP (247 aa)). Arg-775 provides a ligand contact to NADP(+). His-797 is a binding site for FAD. The interval 817 to 843 (EDPPPSTEPVAVEQLEKGSPGGPPPGW) is disordered. A Phosphoserine modification is found at Ser-835. FAD-binding residues include Arg-937, Tyr-939, Ser-940, Thr-955, Ala-957, Tyr-961, Val-974, Cys-975, and Ser-976. NADP(+) contacts are provided by Thr-1015, Arg-1048, Ser-1077, Arg-1078, Lys-1084, Tyr-1086, and Gln-1088. Thr-1174 bears the Phosphothreonine mark. Residue Ser-1176 is modified to Phosphoserine; by AMPK. At Ser-1178 the chain carries Phosphoserine.

Belongs to the NOS family. In terms of assembly, homodimer. Interacts with NOSIP and NOSTRIN. Interacts with HSP90AB1. Forms a complex with ASL, ASS1 and SLC7A1; the complex regulates cell-autonomous L-arginine synthesis and citrulline recycling while channeling extracellular L-arginine to nitric oxide synthesis pathway. Heme b serves as cofactor. FAD is required as a cofactor. Requires FMN as cofactor. It depends on (6R)-L-erythro-5,6,7,8-tetrahydrobiopterin as a cofactor. Post-translationally, phosphorylation by AMPK at Ser-1176 in the presence of Ca(2+)-calmodulin (CaM) activates activity. In absence of Ca(2+)-calmodulin, AMPK also phosphorylates Thr-494, resulting in inhibition of activity. As to expression, expressed constitutively by vascular endothelium. Detected in alveolar and serosal epithelial cells as well as in endothelial cells in one day old rat. In adult lung, detected in rare endothelial cells.

It is found in the membrane. Its subcellular location is the caveola. The protein localises to the cytoplasm. It localises to the cytoskeleton. The protein resides in the golgi apparatus. It is found in the cell membrane. The catalysed reaction is 2 L-arginine + 3 NADPH + 4 O2 + H(+) = 2 L-citrulline + 2 nitric oxide + 3 NADP(+) + 4 H2O. With respect to regulation, stimulated by calcium/calmodulin. Inhibited by NOSIP and NOSTRIN. Functionally, produces nitric oxide (NO) which is implicated in vascular smooth muscle relaxation through a cGMP-mediated signal transduction pathway. NO mediates vascular endothelial growth factor (VEGF)-induced angiogenesis in coronary vessels and promotes blood clotting through the activation of platelets. In Rattus norvegicus (Rat), this protein is Nitric oxide synthase 3.